A 360-amino-acid polypeptide reads, in one-letter code: 3-dehydroquinate synthase (360 aa).

NAD(+)-binding positions include 104-108, 128-129, lysine 141, and 168-171; these read GVIGD, TT, and FLDT. Zn(2+) contacts are provided by glutamate 183, histidine 243, and histidine 260.

Belongs to the sugar phosphate cyclases superfamily. Dehydroquinate synthase family. Co(2+) is required as a cofactor. The cofactor is Zn(2+). It depends on NAD(+) as a cofactor.

Its subcellular location is the cytoplasm. It catalyses the reaction 7-phospho-2-dehydro-3-deoxy-D-arabino-heptonate = 3-dehydroquinate + phosphate. It participates in metabolic intermediate biosynthesis; chorismate biosynthesis; chorismate from D-erythrose 4-phosphate and phosphoenolpyruvate: step 2/7. Functionally, catalyzes the conversion of 3-deoxy-D-arabino-heptulosonate 7-phosphate (DAHP) to dehydroquinate (DHQ). This Streptococcus equi subsp. equi (strain 4047) protein is 3-dehydroquinate synthase.